We begin with the raw amino-acid sequence, 421 residues long: Acyl-coenzyme A thioesterase 1 (421 aa).

Active-site charge relay system residues include S232, D326, and H360.

Belongs to the C/M/P thioester hydrolase family. As to quaternary structure, monomer.

Its subcellular location is the cytoplasm. The protein resides in the cytosol. The enzyme catalyses hexadecanoyl-CoA + H2O = hexadecanoate + CoA + H(+). The catalysed reaction is decanoyl-CoA + H2O = decanoate + CoA + H(+). It catalyses the reaction dodecanoyl-CoA + H2O = dodecanoate + CoA + H(+). It carries out the reaction tetradecanoyl-CoA + H2O = tetradecanoate + CoA + H(+). The enzyme catalyses octadecanoyl-CoA + H2O = octadecanoate + CoA + H(+). The catalysed reaction is eicosanoyl-CoA + H2O = eicosanoate + CoA + H(+). It catalyses the reaction (9Z)-octadecenoyl-CoA + H2O = (9Z)-octadecenoate + CoA + H(+). It carries out the reaction (9Z)-hexadecenoyl-CoA + H2O = (9Z)-hexadecenoate + CoA + H(+). The enzyme catalyses (9E)-octadecenoyl-CoA + H2O = (9E)-octadecenoate + CoA + H(+). The protein operates within lipid metabolism; fatty acid metabolism. Its function is as follows. Catalyzes the hydrolysis of acyl-CoAs into free fatty acids and coenzyme A (CoASH), regulating their respective intracellular levels. More active towards saturated and unsaturated long chain fatty acyl-CoAs (C12-C20). This is Acyl-coenzyme A thioesterase 1 (ACOT1) from Homo sapiens (Human).